The chain runs to 210 residues: Glutathione S-transferase mdpJ (210 aa).

The region spanning 2 to 83 is the GST N-terminal domain; sequence SFGTLYTHNP…YCNDERSSLR (82 aa). The GST C-terminal domain maps to 77–200; it reads DERSSLRILQ…VAGGVPDLGL (124 aa).

It belongs to the GST superfamily.

It functions in the pathway secondary metabolite biosynthesis. Functionally, glutathione S-transferase; part of the gene cluster that mediates the biosynthesis of monodictyphenone, a prenyl xanthone derivative. The pathway begins with the synthesis of atrochrysone thioester by the polyketide synthase (PKS) mdpG. The atrochrysone carboxyl ACP thioesterase mdpF then breaks the thioester bond and releases the atrochrysone carboxylic acid from mdpG. The atrochrysone carboxylic acid is then converted to atrochrysone which is further transformed into emodin anthrone. The next step is performed by the anthrone oxygenase mdpH that catalyzes the oxidation of emodinanthrone to emodin. Emodin is further modified to yield monodictyphenone via several steps involving mdpB, mdpC mdpJ, mdpK and mdpL. These enzymes with xptA, xptB and xptC are also proposed to be involved in the synthesis of shamixanthone from emodin. Especially, direct reduction of emodin by the short chain dehydrogenase mdpC followed by dehydration catalyzed by the scytalone dehydratase-like protein mdpB gives loss of oxygen and formation of chrysophanol intermediate in two simple steps. The chain is Glutathione S-transferase mdpJ from Emericella nidulans (strain FGSC A4 / ATCC 38163 / CBS 112.46 / NRRL 194 / M139) (Aspergillus nidulans).